The following is a 122-amino-acid chain: uncharacterized protein (122 aa).

Residues 1–15 are compositionally biased toward basic and acidic residues; that stretch reads MAEPGGRGDYHKDGR. The interval 1-26 is disordered; that stretch reads MAEPGGRGDYHKDGRPPSLSRSPLFT.

This is an uncharacterized protein from Macaca fascicularis (Crab-eating macaque).